Here is a 498-residue protein sequence, read N- to C-terminus: Hexokinase-1 (498 aa).

The region spanning 39–492 (AAAQRVVAEL…SGLGAALVAA (454 aa)) is the Hexokinase domain. The segment at 95 to 233 (TGGEEGSYYA…GLDMRVSALI (139 aa)) is hexokinase small subdomain. ADP-binding residues include glycine 109, threonine 110, and asparagine 111. Positions 199, 200, 234, and 235 each coordinate D-glucose. A hexokinase large subdomain region spans residues 234-481 (NDTVGTLAAG…ERVVVKLASD (248 aa)). Position 258 (threonine 258) interacts with ADP. D-glucose-binding residues include asparagine 261, glutamate 290, and glutamate 321. Residue glycine 446 coordinates ADP.

Belongs to the hexokinase family. As to expression, highly expressed in senescent leaves.

It catalyses the reaction a D-hexose + ATP = a D-hexose 6-phosphate + ADP + H(+). The enzyme catalyses D-fructose + ATP = D-fructose 6-phosphate + ADP + H(+). The catalysed reaction is D-glucose + ATP = D-glucose 6-phosphate + ADP + H(+). The protein operates within carbohydrate metabolism; hexose metabolism. It functions in the pathway carbohydrate degradation; glycolysis; D-glyceraldehyde 3-phosphate and glycerone phosphate from D-glucose: step 1/4. Functionally, fructose and glucose phosphorylating enzyme. Acts as a positive regulator of leaf senescence by mediating glucose accumulation and inducing an increase in reactive oxygen species (ROS). In Oryza sativa subsp. japonica (Rice), this protein is Hexokinase-1 (HXK1).